The sequence spans 187 residues: Ribosome-recycling factor (187 aa).

The protein belongs to the RRF family.

Its subcellular location is the cytoplasm. Functionally, responsible for the release of ribosomes from messenger RNA at the termination of protein biosynthesis. May increase the efficiency of translation by recycling ribosomes from one round of translation to another. The polypeptide is Ribosome-recycling factor (Mycoplasmopsis pulmonis (strain UAB CTIP) (Mycoplasma pulmonis)).